We begin with the raw amino-acid sequence, 547 residues long: 4-coumarate-CoA ligase 1 (547 aa).

ATP-binding positions include 190–194 (SSGTT), His238, 310–312 (AAP), 332–333 (QG), Thr337, Asp421, Arg436, and Lys527. Residues 263 to 332 (EIVRLMELVE…EKLPNAKLGQ (70 aa)) form an SBD1 region. An SBD2 region spans residues 333 to 400 (GYGMTEAGPV…IRGNQIMKGY (68 aa)).

It belongs to the ATP-dependent AMP-binding enzyme family. In terms of tissue distribution, mostly expressed in stems, and, to a lower extent, in bulbs.

It catalyses the reaction (E)-4-coumarate + ATP + CoA = (E)-4-coumaroyl-CoA + AMP + diphosphate. The protein operates within phytoalexin biosynthesis; 3,4',5-trihydroxystilbene biosynthesis; 3,4',5-trihydroxystilbene from trans-4-coumarate: step 1/2. In terms of biological role, produces CoA thioesters of a variety of hydroxy- and methoxy-substituted cinnamic acids, which are used to synthesize several phenylpropanoid-derived compounds, including anthocyanins, flavonoids, isoflavonoids, coumarins, lignin, suberin and wall-bound phenolics. The polypeptide is 4-coumarate-CoA ligase 1 (Narcissus pseudonarcissus (Daffodil)).